A 288-amino-acid polypeptide reads, in one-letter code: Homoserine kinase (288 aa).

78 to 88 (PLARGLGSSSS) contributes to the ATP binding site.

This sequence belongs to the GHMP kinase family. Homoserine kinase subfamily.

Its subcellular location is the cytoplasm. The catalysed reaction is L-homoserine + ATP = O-phospho-L-homoserine + ADP + H(+). It functions in the pathway amino-acid biosynthesis; L-threonine biosynthesis; L-threonine from L-aspartate: step 4/5. In terms of biological role, catalyzes the ATP-dependent phosphorylation of L-homoserine to L-homoserine phosphate. The protein is Homoserine kinase of Streptococcus agalactiae serotype V (strain ATCC BAA-611 / 2603 V/R).